The chain runs to 261 residues: Carnitinyl-CoA dehydratase (261 aa).

E111 acts as the Nucleophile in catalysis. Catalysis depends on E131, which acts as the Proton acceptor.

Belongs to the enoyl-CoA hydratase/isomerase family.

It carries out the reaction (R)-carnitinyl-CoA = crotonobetainyl-CoA + H2O. It participates in amine and polyamine metabolism; carnitine metabolism. In terms of biological role, catalyzes the reversible dehydration of L-carnitinyl-CoA to crotonobetainyl-CoA. The protein is Carnitinyl-CoA dehydratase of Proteus mirabilis (strain HI4320).